A 158-amino-acid polypeptide reads, in one-letter code: Urease accessory protein UreE (158 aa).

Residues 133–158 (PEGGAYQAHSHDGHSHHQGHTHDHHD) form a disordered region. Residues 141 to 158 (HSHDGHSHHQGHTHDHHD) are compositionally biased toward basic and acidic residues.

Belongs to the UreE family.

The protein resides in the cytoplasm. Its function is as follows. Involved in urease metallocenter assembly. Binds nickel. Probably functions as a nickel donor during metallocenter assembly. This is Urease accessory protein UreE from Chelativorans sp. (strain BNC1).